The following is a 210-amino-acid chain: Proteasome subunit beta 2 (210 aa).

The propeptide at 1 to 12 (MSNNVEEKILHG) is removed in mature form; by autocatalysis. Thr13 (nucleophile) is an active-site residue.

This sequence belongs to the peptidase T1B family. In terms of assembly, the 20S proteasome core is composed of 14 alpha and 14 beta subunits that assemble into four stacked heptameric rings, resulting in a barrel-shaped structure. The two inner rings, each composed of seven catalytic beta subunits, are sandwiched by two outer rings, each composed of seven alpha subunits. The catalytic chamber with the active sites is on the inside of the barrel. Has a gated structure, the ends of the cylinder being occluded by the N-termini of the alpha-subunits. Is capped at one or both ends by the proteasome regulatory ATPase, PAN.

It localises to the cytoplasm. It carries out the reaction Cleavage of peptide bonds with very broad specificity.. With respect to regulation, the formation of the proteasomal ATPase PAN-20S proteasome complex, via the docking of the C-termini of PAN into the intersubunit pockets in the alpha-rings, triggers opening of the gate for substrate entry. Interconversion between the open-gate and close-gate conformations leads to a dynamic regulation of the 20S proteasome proteolysis activity. Functionally, component of the proteasome core, a large protease complex with broad specificity involved in protein degradation. This Nitrosopumilus maritimus (strain SCM1) protein is Proteasome subunit beta 2.